A 705-amino-acid chain; its full sequence is Tetratricopeptide repeat protein 12 (705 aa).

The residue at position 71 (Thr71) is a Phosphothreonine. 3 TPR repeats span residues 106–139 (ADAL…LKDM), 140–173 (KVLY…DEKC), and 174–207 (TKAY…NPKL).

Expressed in testis and in epithelial cells of trachea and bronchial tube.

The protein localises to the cytoplasm. Its function is as follows. Cytoplasmic protein that plays a role in the proper assembly of dynein arm complexes in motile cilia in both respiratory cells and sperm flagella. The chain is Tetratricopeptide repeat protein 12 (TTC12) from Homo sapiens (Human).